The chain runs to 324 residues: Biotin synthase (324 aa).

The region spanning 42-269 (NEVQISSLLN…KSYIRLAAGR (228 aa)) is the Radical SAM core domain. The [4Fe-4S] cluster site is built by Cys57, Cys61, and Cys64. [2Fe-2S] cluster is bound by residues Cys101, Cys132, Cys192, and Arg264.

This sequence belongs to the radical SAM superfamily. Biotin synthase family. Homodimer. The cofactor is [4Fe-4S] cluster. It depends on [2Fe-2S] cluster as a cofactor.

The catalysed reaction is (4R,5S)-dethiobiotin + (sulfur carrier)-SH + 2 reduced [2Fe-2S]-[ferredoxin] + 2 S-adenosyl-L-methionine = (sulfur carrier)-H + biotin + 2 5'-deoxyadenosine + 2 L-methionine + 2 oxidized [2Fe-2S]-[ferredoxin]. It functions in the pathway cofactor biosynthesis; biotin biosynthesis; biotin from 7,8-diaminononanoate: step 2/2. In terms of biological role, catalyzes the conversion of dethiobiotin (DTB) to biotin by the insertion of a sulfur atom into dethiobiotin via a radical-based mechanism. The polypeptide is Biotin synthase (Ehrlichia canis (strain Jake)).